Here is a 450-residue protein sequence, read N- to C-terminus: Sorting nexin-4 (450 aa).

Met1 carries the post-translational modification N-acetylmethionine. Residues 1 to 46 are disordered; it reads MEQAPPDPEKLLQPGPLEPLGGPGAVLEAAVGEENEGTREDGSGVD. A compositionally biased stretch (low complexity) spans 11–20; sequence LLQPGPLEPL. Positions 61-187 constitute a PX domain; it reads SVSEAEKRTG…YSFLTQEGNW (127 aa). Positions 106, 108, 132, and 154 each coordinate a 1,2-diacyl-sn-glycero-3-phospho-(1D-myo-inositol-3-phosphate).

Belongs to the sorting nexin family. Heterodimer; heterodimerizes with SNX7 or SNX30. Interacts with WWC1/KIBRA. Identified in a complex with WWC1/KIBRA and dynein components DYNLL1 and DYNC1I2. Interacts with BIN1.

Its subcellular location is the early endosome. The protein resides in the early endosome membrane. Functionally, involved in the regulation of endocytosis and in several stages of intracellular trafficking. Plays a role in recycling endocytosed transferrin receptor and prevent its degradation. Involved in autophagosome assembly by regulating trafficking and recycling of phospholipid scramblase ATG9A. This Mus musculus (Mouse) protein is Sorting nexin-4.